We begin with the raw amino-acid sequence, 489 residues long: Zinc finger protein 58 (489 aa).

The KRAB domain maps to 2–73; it reads LSFWDVAIDF…KRQAAAAVHP (72 aa). The C2H2-type 1; degenerate zinc-finger motif lies at 78–100; the sequence is NKCKDFSKAFFCKSLLTQHQRIR. 14 C2H2-type zinc fingers span residues 106-128, 134-156, 162-184, 190-212, 218-240, 246-268, 274-296, 302-324, 330-352, 358-380, 386-408, 410-432, 438-460, and 466-488; these read FKCE…KRIH, YKCE…QRVH, YKCE…KRIH, YKCE…QKNH, YKCE…QRIH, YKCE…QIIH, YKCA…QRIH, CKCK…QRIH, YKCG…QRFH, YKCE…KLRH, YKCE…QKIH, YKCG…QRVH, HVCE…QLVH, and YKCE…QGIH.

It belongs to the krueppel C2H2-type zinc-finger protein family. As to expression, expressed in liver, testis and, at considerably lower levels, in brain, spleen and heart.

It localises to the nucleus. May have a role during differentiation processes. This is Zinc finger protein 58 (Zfp58) from Mus musculus (Mouse).